The chain runs to 609 residues: Chloride channel CLIC-like protein 1 (609 aa).

The N-terminal stretch at 1 to 25 (MKLSSSSSFGLCILVVFFCFVVIES) is a signal peptide. The next 3 helical transmembrane spans lie at 212–235 (VSLI…SWFV), 241–260 (FAVS…YMLA), and 358–380 (VTLQ…YGSA). A disordered region spans residues 398–553 (EQPPPAVGQR…PSSIDVKTVG (156 aa)). Composition is skewed to basic and acidic residues over residues 454–474 (ENRE…KRTP) and 507–537 (EEVK…DRSE). The span at 538-547 (PITSEPPSSI) shows a compositional bias: low complexity.

This sequence belongs to the chloride channel MCLC family. In terms of tissue distribution, expressed in the hindbrain, swim bladder and the eye at 1 day post fertilization (dpf) with increased expression at 3 dpf. At 3 dpf, most prominent expression in the retina, with strong expression in the ganglion cell layer, outer nuclear layer and the retinal pigmented epithelium.

It localises to the endoplasmic reticulum membrane. It is found in the golgi apparatus membrane. The protein localises to the nucleus membrane. Functionally, seems to act as a chloride ion channel. Plays a role in retina development. The sequence is that of Chloride channel CLIC-like protein 1 from Danio rerio (Zebrafish).